The chain runs to 801 residues: Transferrin receptor protein 2 (801 aa).

The Cytoplasmic portion of the chain corresponds to 1-83; that stretch reads MERLWGLFQR…WAAAGRRAAP (83 aa). The interval 16–45 is disordered; the sequence is PRSSQTVYQRVEGPRKGHLEEEEEDGEEGA. The short motif at 23-26 is the Endocytosis signal element; it reads YQRV. The span at 35-45 shows a compositional bias: acidic residues; the sequence is EEEEEDGEEGA. Residues 84 to 104 traverse the membrane as a helical; Signal-anchor for type II membrane protein segment; it reads YLVLTALLIFTGAFLLGYVAF. Residues 105–801 lie on the Extracellular side of the membrane; the sequence is RGSCQACGDS…GDVWNIDNNF (697 aa). 4 N-linked (GlcNAc...) asparagine glycosylation sites follow: Asn240, Asn339, Asn540, and Asn754.

It belongs to the peptidase M28 family. M28B subfamily. As to quaternary structure, homodimer. Predominantly expressed in liver. While the alpha form is also expressed in spleen, lung, muscle, prostate and peripheral blood mononuclear cells, the beta form is expressed in all tissues tested, albeit weakly.

It is found in the cell membrane. Its subcellular location is the cytoplasm. Its function is as follows. Mediates cellular uptake of transferrin-bound iron in a non-iron dependent manner. May be involved in iron metabolism, hepatocyte function and erythrocyte differentiation. The sequence is that of Transferrin receptor protein 2 (TFR2) from Homo sapiens (Human).